The chain runs to 57 residues: Large ribosomal subunit protein bL32 (57 aa).

Residues 1–19 show a composition bias toward basic residues; sequence MAVPKRRMSRSNTRSRRSQ. The segment at 1–22 is disordered; sequence MAVPKRRMSRSNTRSRRSQWKA.

Belongs to the bacterial ribosomal protein bL32 family.

The protein is Large ribosomal subunit protein bL32 of Rhodococcus jostii (strain RHA1).